A 327-amino-acid chain; its full sequence is Cytochrome f (327 aa).

The N-terminal stretch at 1 to 24 (MKRIYLALCALLLLLGTGSRPAAA) is a signal peptide. Heme is bound by residues Tyr-25, Cys-45, Cys-48, and His-49. Residues 293-313 (VKWLVAFLAAVAITQLLLVLK) form a helical membrane-spanning segment.

This sequence belongs to the cytochrome f family. The 4 large subunits of the cytochrome b6-f complex are cytochrome b6, subunit IV (17 kDa polypeptide, PetD), cytochrome f and the Rieske protein, while the 4 small subunits are PetG, PetL, PetM and PetN. The complex functions as a dimer. Requires heme as cofactor.

It localises to the cellular thylakoid membrane. Its function is as follows. Component of the cytochrome b6-f complex, which mediates electron transfer between photosystem II (PSII) and photosystem I (PSI), cyclic electron flow around PSI, and state transitions. The chain is Cytochrome f from Synechococcus sp. (strain JA-3-3Ab) (Cyanobacteria bacterium Yellowstone A-Prime).